The primary structure comprises 277 residues: Ribosomal RNA small subunit methyltransferase A (277 aa).

S-adenosyl-L-methionine is bound by residues histidine 15, leucine 17, glycine 42, glutamate 64, aspartate 89, and asparagine 109.

It belongs to the class I-like SAM-binding methyltransferase superfamily. rRNA adenine N(6)-methyltransferase family. RsmA subfamily.

It localises to the cytoplasm. The enzyme catalyses adenosine(1518)/adenosine(1519) in 16S rRNA + 4 S-adenosyl-L-methionine = N(6)-dimethyladenosine(1518)/N(6)-dimethyladenosine(1519) in 16S rRNA + 4 S-adenosyl-L-homocysteine + 4 H(+). In terms of biological role, specifically dimethylates two adjacent adenosines (A1518 and A1519) in the loop of a conserved hairpin near the 3'-end of 16S rRNA in the 30S particle. May play a critical role in biogenesis of 30S subunits. The protein is Ribosomal RNA small subunit methyltransferase A of Synechococcus sp. (strain CC9311).